Consider the following 271-residue polypeptide: Tropinone reductase homolog At2g29360 (271 aa).

22-46 is a binding site for NADP(+); sequence LVTGGSKGIGEAVVEELATLGARIH. Substrate is bound at residue Ser155. The Proton acceptor role is filled by Tyr168.

It belongs to the short-chain dehydrogenases/reductases (SDR) family. SDR65C subfamily.

Its function is as follows. Oxidoreductase active on cyclic ketones, but not on tropinone or nortropinone. The protein is Tropinone reductase homolog At2g29360 of Arabidopsis thaliana (Mouse-ear cress).